Reading from the N-terminus, the 272-residue chain is MDLLHAALLGLIQGATEVLPISSSGHLILIPRLLGWPDSGLTFDVALHFGTFLAIFVYFRKDVVSLVQDGLTGFFQPEAPRRLRLPWMIVLASIPAAIAGKTLEQPIEELFRSSPLMIALMLILFGLGLGLTDRYGKKLHDVASITLGTAMLVGCFQCLALVPGVSRSGITITAGLLLGLARTDAARFSFLLSLPIVFGAALLKGLHLLKHGIEPGMAMPMLVGVAVSAVVGYISVAFLLKFVQSRTLWPFVWYRVAAGIGVMALLGVGLLS.

Transmembrane regions (helical) follow at residues 39–59, 87–107, 113–133, 145–165, 188–208, 220–240, and 251–271; these read SGLT…FVYF, WMIV…EQPI, SSPL…GLTD, ITLG…VPGV, FSFL…GLHL, PMLV…AFLL, and FVWY…VGLL.

It belongs to the UppP family.

It is found in the cell inner membrane. The catalysed reaction is di-trans,octa-cis-undecaprenyl diphosphate + H2O = di-trans,octa-cis-undecaprenyl phosphate + phosphate + H(+). Functionally, catalyzes the dephosphorylation of undecaprenyl diphosphate (UPP). Confers resistance to bacitracin. This Trichlorobacter lovleyi (strain ATCC BAA-1151 / DSM 17278 / SZ) (Geobacter lovleyi) protein is Undecaprenyl-diphosphatase.